A 233-amino-acid chain; its full sequence is Bcl-2-like protein 1 (233 aa).

Residues 4-24 (SNRELVVDFLSYKLSQKGYSW) carry the BH4 motif. The segment at 27–73 (FSDVEENRTEAPEETEPERETPSAINGNPSWHLADSPAVNGATGHSS) is disordered. Phosphoserine; by PLK3 is present on S49. Residue S62 is modified to Phosphoserine; by CDK1. Residues 86–100 (VKQALREAGDEFELR) carry the BH3 motif. A BH1 motif is present at residues 129–148 (ELFRDGVNWGRIVAFFSFGG). The BH2 motif lies at 180–195 (PWIQENGGWDTFVDLY). The helical transmembrane segment at 210-226 (FNRWFLTGMTVAGVVLL) threads the bilayer.

The protein belongs to the Bcl-2 family. Homodimer. Interacts with BCL2L11. Interacts with BAD. Interacts with PGAM5. Interacts with HEBP2. Interacts with p53/TP53 and BBC3; interaction with BBC3 disrupts the interaction with p53/TP53. Interacts with ATP5F1A and ATP5F1B; the interactions mediate the association of isoform Bcl-X(L) with the mitochondrial membrane ATP synthase F(1)F(0) ATP synthase. Interacts with VDAC1. Interacts with BCL2L11 (via BH3). Interacts with RNF183. Interacts with GIMAP3/IAN4 and GIMAP5/IAN5. Interacts with GIMAP5 and HSPA8/HSC70; the interaction between HSPA8 and BCL2L1 is impaired in the absence of GIMAP5. Interacts with isoform 4 of CLU; this interaction releases and activates BAX and promotes cell death. In terms of assembly, forms heterodimers with BAX, BAK or BCL2; heterodimerization with BAX does not seem to be required for anti-apoptotic activity. Interacts with isoform 1 of SIVA1; the interaction inhibits the anti-apoptotic activity. Interacts with IKZF3. Interacts with RTL10/BOP. Interacts with DNM1L and CLTA; DNM1L and BCL2L1 isoform BCL-X(L) may form a complex in synaptic vesicles that also contains clathrin and MFF. Interacts (via the loop between motifs BH4 and BH3) with NLRP1 (via LRR repeats), but not with NLRP2, NLRP3, NLRP4, PYCARD, nor MEFV. Interacts with BECN1. Post-translationally, proteolytically cleaved by caspases during apoptosis. The cleaved protein, lacking the BH4 motif, has pro-apoptotic activity. Phosphorylated on Ser-62 by CDK1. This phosphorylation is partial in normal mitotic cells, but complete in G2-arrested cells upon DNA-damage, thus promoting subsequent apoptosis probably by triggering caspases-mediated proteolysis. Phosphorylated by PLK3, leading to regulate the G2 checkpoint and progression to cytokinesis during mitosis. Phosphorylation at Ser-49 appears during the S phase and G2, disappears rapidly in early mitosis during prometaphase, metaphase and early anaphase, and re-appears during telophase and cytokinesis. In terms of processing, ubiquitinated by RNF183 during prolonged ER stress, leading to degradation by the proteosome. In terms of tissue distribution, expressed in most tissues. Bcl-X(beta) is specifically expressed in cerebellum, heart, and thymus. In the ovary, the predominant form is Bcl-X(L), with a small but detectable level of Bcl-X(S).

It localises to the mitochondrion inner membrane. The protein resides in the mitochondrion outer membrane. The protein localises to the mitochondrion matrix. It is found in the cytoplasmic vesicle. Its subcellular location is the secretory vesicle. It localises to the synaptic vesicle membrane. The protein resides in the cytoplasm. The protein localises to the cytosol. It is found in the cytoskeleton. Its subcellular location is the microtubule organizing center. It localises to the centrosome. The protein resides in the nucleus membrane. Its function is as follows. Potent inhibitor of cell death. Inhibits activation of caspases. Appears to regulate cell death by blocking the voltage-dependent anion channel (VDAC) by binding to it and preventing the release of the caspase activator, CYC1, from the mitochondrial membrane. Also acts as a regulator of G2 checkpoint and progression to cytokinesis during mitosis. Isoform Bcl-X(L) also regulates presynaptic plasticity, including neurotransmitter release and recovery, number of axonal mitochondria as well as size and number of synaptic vesicle clusters. During synaptic stimulation, increases ATP availability from mitochondria through regulation of mitochondrial membrane ATP synthase F(1)F(0) activity and regulates endocytic vesicle retrieval in hippocampal neurons through association with DMN1L and stimulation of its GTPase activity in synaptic vesicles. May attenuate inflammation impairing NLRP1-inflammasome activation, hence CASP1 activation and IL1B release. In terms of biological role, isoform Bcl-X(S) promotes apoptosis. This is Bcl-2-like protein 1 (Bcl2l1) from Rattus norvegicus (Rat).